The following is a 299-amino-acid chain: MSKVLQMSTVNSLAFIHIPVLTQELIKGLDICPGGHYLDATVGGGGHSRQILETYGDVQVTAIDRDEVAIAAATTNLADYNTDRLTFWTGNFADYDPGNLKFDGIIADLGVSSPQLDSPERGFSFRLDAPLDMRMDRRQSTTAADIINSYSEIELANLFYNYGEERLSRQIAKQIVKQRPFFSTTELAEVISRSVPPKYRYGRIHPATRVFQGLRIAVNQELDSLESFLAKSPSWLKTNGIIGIISFHSLEDRIVKHQLRASPLLKVLTKKPIIPQSDEQAKNPRSRSAKLRLAQRKEQ.

S-adenosyl-L-methionine contacts are provided by residues G45–H47, D64, F92, D108, and Q115. The tract at residues P275–Q299 is disordered. Residues P284–Q299 show a composition bias toward basic residues.

It belongs to the methyltransferase superfamily. RsmH family.

The protein resides in the cytoplasm. The enzyme catalyses cytidine(1402) in 16S rRNA + S-adenosyl-L-methionine = N(4)-methylcytidine(1402) in 16S rRNA + S-adenosyl-L-homocysteine + H(+). In terms of biological role, specifically methylates the N4 position of cytidine in position 1402 (C1402) of 16S rRNA. This chain is Ribosomal RNA small subunit methyltransferase H, found in Gloeothece citriformis (strain PCC 7424) (Cyanothece sp. (strain PCC 7424)).